The chain runs to 246 residues: MIENPSPSAANLPEHPSTDASHPRNIRSFVRRTGRTTVGQAKAFADVGPRFLLAYKAEPLDFAAAFGRVAPTILEIGFGMGEATAHIAALSPDKNFLCCEVHTPGVGALLKRIQEQTLGNIRILQHDAVEVIDNMLPAGSLDGVHIFFPDPWHKKKHNKRRLIQAPLIAKLAARLKPGGYLHCATDWQPYAEQILEVLSAEALLKNTADASGGGYAPKPDYRPLTKFENRGIKLGHGVWDVVFTRV.

Positions 1 to 26 are disordered; that stretch reads MIENPSPSAANLPEHPSTDASHPRNI. S-adenosyl-L-methionine contacts are provided by Glu-75, Glu-100, Asp-127, and Asp-150. The active site involves Asp-150. Lys-154 provides a ligand contact to substrate. The tract at residues 156 to 161 is interaction with RNA; it reads KHNKRR. Substrate-binding positions include Asp-186 and 225 to 228; that span reads TKFE.

Belongs to the class I-like SAM-binding methyltransferase superfamily. TrmB family.

The catalysed reaction is guanosine(46) in tRNA + S-adenosyl-L-methionine = N(7)-methylguanosine(46) in tRNA + S-adenosyl-L-homocysteine. Its pathway is tRNA modification; N(7)-methylguanine-tRNA biosynthesis. Catalyzes the formation of N(7)-methylguanine at position 46 (m7G46) in tRNA. The chain is tRNA (guanine-N(7)-)-methyltransferase from Polaromonas sp. (strain JS666 / ATCC BAA-500).